The primary structure comprises 156 residues: Deoxyuridine 5'-triphosphate nucleotidohydrolase (156 aa).

Substrate is bound by residues 76-78 (RSG), asparagine 89, 93-95 (TVD), and lysine 103.

This sequence belongs to the dUTPase family. Requires Mg(2+) as cofactor.

It carries out the reaction dUTP + H2O = dUMP + diphosphate + H(+). The protein operates within pyrimidine metabolism; dUMP biosynthesis; dUMP from dCTP (dUTP route): step 2/2. This enzyme is involved in nucleotide metabolism: it produces dUMP, the immediate precursor of thymidine nucleotides and it decreases the intracellular concentration of dUTP so that uracil cannot be incorporated into DNA. The polypeptide is Deoxyuridine 5'-triphosphate nucleotidohydrolase (Rhizobium leguminosarum bv. trifolii (strain WSM2304)).